The chain runs to 470 residues: Low molecular weight neuronal intermediate filament (470 aa).

Residues 1 to 91 are head; sequence MTSRELYTSS…KIVRTNEKEQ (91 aa). The region spanning 88-399 is the IF rod domain; the sequence is EKEQLQGLND…KLLEGEETRL (312 aa). The segment at 91-123 is coil 1A; sequence QLQGLNDRFVTYIEKVHHLEQQNKLLESEVTLL. The linker 1 stretch occupies residues 121–136; the sequence is TLLRQKHSEPSRLSHI. The segment at 137–232 is coil 1B; that stretch reads YEQEIRELRS…KVHEEEIAEL (96 aa). The linker 12 stretch occupies residues 233–251; that stretch reads QASVQEAQISVEMDVVSKP. The interval 252-270 is coil 2A; that stretch reads DLTAALKEIRMQYEVLSAR. Positions 271–279 are linker 2; that stretch reads NQQSSEEWY. Residues 280 to 395 form a coil 2B region; sequence QAKIANVSLE…AAYRKLLEGE (116 aa). The tract at residues 396 to 470 is tail; sequence ETRLTSVGGG…EKISQKAAAN (75 aa). A compositionally biased stretch (low complexity) spans 414 to 431; the sequence is FSSGSYSGGRSSTTSTIS. The interval 414-470 is disordered; that stretch reads FSSGSYSGGRSSTTSTISIRKEEKKESPEGGKGGSSGQPKTSKPGDQEKISQKAAAN. A compositionally biased stretch (basic and acidic residues) spans 432 to 442; it reads IRKEEKKESPE.

Belongs to the intermediate filament family. Nervous system; in axons in the PNS and in small perikarya in the dorsal root ganglion.

In Xenopus laevis (African clawed frog), this protein is Low molecular weight neuronal intermediate filament.